We begin with the raw amino-acid sequence, 195 residues long: NADH-ubiquinone oxidoreductase subunit 9 (195 aa).

This sequence belongs to the complex I 30 kDa subunit family. Complex I is composed of about 30 different subunits.

Its subcellular location is the mitochondrion inner membrane. It carries out the reaction a ubiquinone + NADH + 5 H(+)(in) = a ubiquinol + NAD(+) + 4 H(+)(out). Core subunit of the mitochondrial membrane respiratory chain NADH dehydrogenase (Complex I) that is believed to belong to the minimal assembly required for catalysis. Complex I functions in the transfer of electrons from NADH to the respiratory chain. The immediate electron acceptor for the enzyme is believed to be ubiquinone. The protein is NADH-ubiquinone oxidoreductase subunit 9 (NAD9) of Acanthamoeba castellanii (Amoeba).